We begin with the raw amino-acid sequence, 222 residues long: Interleukin-12 subunit alpha (222 aa).

An N-terminal signal peptide occupies residues 1 to 25 (MCPLRSLFLMATLVFLNHLDHLSLA). 3 disulfides stabilise this stretch: cysteine 40–cysteine 113, cysteine 67–cysteine 199, and cysteine 88–cysteine 126. N-linked (GlcNAc...) asparagine glycosylation is found at asparagine 96 and asparagine 174.

Belongs to the IL-6 superfamily. In terms of assembly, heterodimer with IL12B; disulfide-linked. This heterodimer is known as interleukin IL-12. Heterodimer with EBI3/IL27B; not disulfide-linked. This heterodimer is known as interleukin IL-35. Interacts with NBR1; this interaction promotes IL-12 secretion.

The protein localises to the secreted. Heterodimerizes with IL12B to form the IL-12 cytokine or with EBI3/IL27B to form the IL-35 cytokine. IL-12 is primarily produced by professional antigen-presenting cells (APCs) such as B-cells and dendritic cells (DCs) as well as macrophages and granulocytes and regulates T-cell and natural killer-cell responses, induces the production of interferon-gamma (IFN-gamma), favors the differentiation of T-helper 1 (Th1) cells and is an important link between innate resistance and adaptive immunity. Mechanistically, exerts its biological effects through a receptor composed of IL12R1 and IL12R2 subunits. Binding to the receptor results in the rapid tyrosine phosphorylation of a number of cellular substrates including the JAK family kinases TYK2 and JAK2. In turn, recruited STAT4 gets phosphorylated and translocates to the nucleus where it regulates cytokine/growth factor responsive genes. As part of IL-35, plays essential roles in maintaining the immune homeostasis of the liver microenvironment and also functions as an immune-suppressive cytokine. Mediates biological events through unconventional receptors composed of IL12RB2 and gp130/IL6ST heterodimers or homodimers. Signaling requires the transcription factors STAT1 and STAT4, which form a unique heterodimer that binds to distinct DNA sites. This chain is Interleukin-12 subunit alpha (IL12A), found in Lama glama (Llama).